The sequence spans 27 residues: Protein YqiM (27 aa).

This chain is Protein YqiM, found in Escherichia coli (strain K12).